A 1460-amino-acid polypeptide reads, in one-letter code: Probable outer membrane protein PmpC (1460 aa).

A signal peptide spans 1 to 20 (MKFLSATAVFAAALPSITSA). 5 disordered regions span residues 21–48 (SSVESQIETKDLNSSRTGSSSSQSFTEI), 92–212 (SEEN…PDKD), 279–372 (TPPA…ESGS), 455–549 (TPEE…DSSI), and 993–1021 (VDTSTNSGNSSSTPPSSNTPPNSTPTAQA). Low complexity predominate over residues 34–44 (SSRTGSSSSQS). Residues 97–114 (QASFQDSAQNQTENASEG) are compositionally biased toward polar residues. Positions 115-137 (NSPNSENTNQSSTTETESITTDE) are enriched in low complexity. The span at 138 to 155 (QVQNDNESAASVPTTVET) shows a compositional bias: polar residues. Residues 290 to 327 (NDPSGSNGNDGSDDSNSSGNTDSNESNPNNSASNNTGS) show a composition bias toward low complexity. Polar residues predominate over residues 328-358 (ENELSSSTPSAQLPNPATPFLSSVSTNSQPI). A compositionally biased stretch (low complexity) spans 461 to 471 (LKSSQLNNQNP). A compositionally biased stretch (polar residues) spans 487–501 (SLETSPITNQDSASS). Composition is skewed to low complexity over residues 504-548 (AIFR…SDSS) and 995-1018 (TSTNSGNSSSTPPSSNTPPNSTPT). Residues 1167–1460 (DEVAYNNLWI…MINCGARMTF (294 aa)) enclose the Autotransporter domain.

The protein belongs to the PMP outer membrane protein family.

The protein localises to the secreted. The protein resides in the cell wall. Its subcellular location is the cell outer membrane. The sequence is that of Probable outer membrane protein PmpC (pmpC) from Chlamydia muridarum (strain MoPn / Nigg).